Here is a 356-residue protein sequence, read N- to C-terminus: Outer membrane protein Omp38 (356 aa).

Positions M1–A19 are cleaved as a signal peptide. Residues E221–R339 enclose the OmpA-like domain.

Belongs to the outer membrane OOP (TC 1.B.6) superfamily. In terms of assembly, homotrimer.

The protein localises to the cell outer membrane. Its function is as follows. Porin. Induces apoptosis in human cells through caspases-dependent and AIF-dependent pathways. Purified Omp38 enters the cells and localizes to the mitochondria, which leads to a release of proapoptotic molecules such as cytochrome c and AIF (apoptosis-inducing factor). This is Outer membrane protein Omp38 (omp38) from Acinetobacter baumannii (strain ATCC 17978 / DSM 105126 / CIP 53.77 / LMG 1025 / NCDC KC755 / 5377).